The following is a 330-amino-acid chain: Ketol-acid reductoisomerase (NADP(+)) (330 aa).

One can recognise a KARI N-terminal Rossmann domain in the interval M1 to T182. Residues Y25–Q28, S51, S53, and D83–Q86 each bind NADP(+). H108 is a catalytic residue. Position 134 (G134) interacts with NADP(+). The KARI C-terminal knotted domain occupies T183 to L328. Mg(2+) is bound by residues D191, E195, E227, and E231. S252 is a substrate binding site.

It belongs to the ketol-acid reductoisomerase family. Requires Mg(2+) as cofactor.

It catalyses the reaction (2R)-2,3-dihydroxy-3-methylbutanoate + NADP(+) = (2S)-2-acetolactate + NADPH + H(+). It carries out the reaction (2R,3R)-2,3-dihydroxy-3-methylpentanoate + NADP(+) = (S)-2-ethyl-2-hydroxy-3-oxobutanoate + NADPH + H(+). It functions in the pathway amino-acid biosynthesis; L-isoleucine biosynthesis; L-isoleucine from 2-oxobutanoate: step 2/4. It participates in amino-acid biosynthesis; L-valine biosynthesis; L-valine from pyruvate: step 2/4. In terms of biological role, involved in the biosynthesis of branched-chain amino acids (BCAA). Catalyzes an alkyl-migration followed by a ketol-acid reduction of (S)-2-acetolactate (S2AL) to yield (R)-2,3-dihydroxy-isovalerate. In the isomerase reaction, S2AL is rearranged via a Mg-dependent methyl migration to produce 3-hydroxy-3-methyl-2-ketobutyrate (HMKB). In the reductase reaction, this 2-ketoacid undergoes a metal-dependent reduction by NADPH to yield (R)-2,3-dihydroxy-isovalerate. The polypeptide is Ketol-acid reductoisomerase (NADP(+)) (Carboxydothermus hydrogenoformans (strain ATCC BAA-161 / DSM 6008 / Z-2901)).